A 298-amino-acid chain; its full sequence is Aquaporin NIP2-1 (298 aa).

3 N-linked (GlcNAc...) asparagine glycosylation sites follow: Asn-4, Asn-13, and Asn-26. The next 2 membrane-spanning stretches (helical) occupy residues 51–71 (VVSE…AAGI) and 85–105 (SIAG…ISGA). The NPA 1 motif lies at 108–110 (NPA). 3 consecutive transmembrane segments (helical) span residues 124–144 (IQVP…SFVL), 166–186 (SLVV…AVAT), and 194–214 (LAGL…GAIS). The short motif at 219 to 221 (NPA) is the NPA 2 element. A helical transmembrane segment spans residues 237–257 (WIYFLGPVMGTLSGAWTYTFI).

Belongs to the MIP/aquaporin (TC 1.A.8) family. NIP (TC 1.A.8.12) subfamily. Mainly expressed in the roots. In roots, it localizes in the main and lateral roots, but not in root hairs. Within a root, it localizes on the plasma membrane of the distal side of both exodermis and endodermis, where casparian strips exist (at protein level). Expressed low levels in leaves and anthers.

It is found in the cell membrane. Silicon influx transporter responsible for silicon transport from the external solution to the root cells. Is coupled with the silicon efflux transporter LSI2 in both exodermal and endodermal root cells for an efficient silicon transport across the cells into the stele. Silicon is beneficial to plant growth and helps plants to overcome abiotic and biotic stresses by preventing lodging (falling over) and increasing resistance to pests and diseases, as well as other stresses. Is coupled with LSI2 transporter in roots for efficient uptake of arsenite, which is further dispatched in shoots and grains. Mediates uptake of methylated arsenic species in roots. This chain is Aquaporin NIP2-1, found in Oryza sativa subsp. japonica (Rice).